Here is a 539-residue protein sequence, read N- to C-terminus: Dihydrolipoyllysine-residue acetyltransferase component 3 of pyruvate dehydrogenase complex, mitochondrial (539 aa).

The transit peptide at 1–102 directs the protein to the mitochondrion; it reads MAYASRIINH…SCLMQSARGF (102 aa). One can recognise a Lipoyl-binding domain in the interval 111–187; sequence HQEIGMPSLS…QVGEVIAITV (77 aa). Lys152 carries the N6-lipoyllysine modification. A disordered region spans residues 195–247; that stretch reads KFKDYTPSSTADAAPTKAEPTPAPPKEEKVKQPSSPPEPKASKPSTPPTGDRV. A compositionally biased stretch (low complexity) spans 204 to 214; that stretch reads TADAAPTKAEP. In terms of domain architecture, Peripheral subunit-binding (PSBD) spans 248–285; sequence FASPLARKLAEDNNVPLSDIEGTGPEGRIVKADIDEYL. Catalysis depends on residues His512 and Asp516.

The protein belongs to the 2-oxoacid dehydrogenase family. Requires (R)-lipoate as cofactor.

Its subcellular location is the mitochondrion matrix. The enzyme catalyses N(6)-[(R)-dihydrolipoyl]-L-lysyl-[protein] + acetyl-CoA = N(6)-[(R)-S(8)-acetyldihydrolipoyl]-L-lysyl-[protein] + CoA. The pyruvate dehydrogenase complex catalyzes the overall conversion of pyruvate to acetyl-CoA and CO(2). It contains multiple copies of three enzymatic components: pyruvate dehydrogenase (E1), dihydrolipoamide acetyltransferase (E2) and lipoamide dehydrogenase (E3). This is Dihydrolipoyllysine-residue acetyltransferase component 3 of pyruvate dehydrogenase complex, mitochondrial from Arabidopsis thaliana (Mouse-ear cress).